A 514-amino-acid polypeptide reads, in one-letter code: 2,3-bisphosphoglycerate-independent phosphoglycerate mutase (514 aa).

Mn(2+) is bound by residues D14 and S64. S64 (phosphoserine intermediate) is an active-site residue. Residues H125, 155–156 (RD), R187, R193, 263–266 (RADR), and K336 each bind substrate. The Mn(2+) site is built by D403, H407, D444, H445, and H463.

This sequence belongs to the BPG-independent phosphoglycerate mutase family. As to quaternary structure, monomer. Mn(2+) is required as a cofactor.

It catalyses the reaction (2R)-2-phosphoglycerate = (2R)-3-phosphoglycerate. The protein operates within carbohydrate degradation; glycolysis; pyruvate from D-glyceraldehyde 3-phosphate: step 3/5. In terms of biological role, catalyzes the interconversion of 2-phosphoglycerate and 3-phosphoglycerate. The sequence is that of 2,3-bisphosphoglycerate-independent phosphoglycerate mutase from Shewanella baltica (strain OS185).